We begin with the raw amino-acid sequence, 174 residues long: DNA replication inhibitor plutonium (174 aa).

2 ANK repeats span residues 39 to 68 (YGNTALLKACYLGRFECARTLLEFGANIFA) and 72 to 103 (FGQNALTLATYAGHLTLVKELLRRRSYKDFNL). Position 167 is a phosphothreonine (threonine 167).

In terms of biological role, inhibits DNA replication early in developments. May bind and block the action of a replication or initiation factor. This chain is DNA replication inhibitor plutonium (plu), found in Drosophila melanogaster (Fruit fly).